The sequence spans 136 residues: Glutamyl-tRNA(Gln) amidotransferase subunit C, mitochondrial (136 aa).

Belongs to the GatC family. In terms of assembly, subunit of the heterotrimeric GatCAB amidotransferase (AdT) complex, composed of A (QRSL1), B (GATB) and C (GATC) subunits.

The protein resides in the mitochondrion. The enzyme catalyses L-glutamyl-tRNA(Gln) + L-glutamine + ATP + H2O = L-glutaminyl-tRNA(Gln) + L-glutamate + ADP + phosphate + H(+). Functionally, allows the formation of correctly charged Gln-tRNA(Gln) through the transamidation of misacylated Glu-tRNA(Gln) in the mitochondria. The reaction takes place in the presence of glutamine and ATP through an activated gamma-phospho-Glu-tRNA(Gln). The polypeptide is Glutamyl-tRNA(Gln) amidotransferase subunit C, mitochondrial (Homo sapiens (Human)).